Consider the following 223-residue polypeptide: Probable transaldolase (223 aa).

Lys-92 serves as the catalytic Schiff-base intermediate with substrate.

The protein belongs to the transaldolase family. Type 3B subfamily.

Its subcellular location is the cytoplasm. The catalysed reaction is D-sedoheptulose 7-phosphate + D-glyceraldehyde 3-phosphate = D-erythrose 4-phosphate + beta-D-fructose 6-phosphate. It functions in the pathway carbohydrate degradation; pentose phosphate pathway; D-glyceraldehyde 3-phosphate and beta-D-fructose 6-phosphate from D-ribose 5-phosphate and D-xylulose 5-phosphate (non-oxidative stage): step 2/3. Its function is as follows. Transaldolase is important for the balance of metabolites in the pentose-phosphate pathway. This is Probable transaldolase from Thermus thermophilus (strain ATCC 27634 / DSM 579 / HB8).